Reading from the N-terminus, the 355-residue chain is Erythronate-4-phosphate dehydrogenase (355 aa).

Positions 45 and 66 each coordinate substrate. Asp-146 lines the NAD(+) pocket. The active site involves Arg-206. Asp-229 is a binding site for NAD(+). Residue Glu-234 is part of the active site. His-251 acts as the Proton donor in catalysis. Gly-254 contributes to the NAD(+) binding site. Tyr-255 serves as a coordination point for substrate.

It belongs to the D-isomer specific 2-hydroxyacid dehydrogenase family. PdxB subfamily. As to quaternary structure, homodimer.

The protein resides in the cytoplasm. It catalyses the reaction 4-phospho-D-erythronate + NAD(+) = (R)-3-hydroxy-2-oxo-4-phosphooxybutanoate + NADH + H(+). The protein operates within cofactor biosynthesis; pyridoxine 5'-phosphate biosynthesis; pyridoxine 5'-phosphate from D-erythrose 4-phosphate: step 2/5. Catalyzes the oxidation of erythronate-4-phosphate to 3-hydroxy-2-oxo-4-phosphonooxybutanoate. In Acinetobacter baumannii (strain AB307-0294), this protein is Erythronate-4-phosphate dehydrogenase.